The chain runs to 243 residues: Probable heat shock transcription factor (243 aa).

Residues 9 to 102 (INKFIRRLYK…GDNLLPCIQR (94 aa)) mediate DNA binding. The involved in trimerization stretch occupies residues 121–164 (QLQDLLQYLNNQNFKLEGEIKSLKDRVDQQDCTINGLVQLLTRI).

This sequence belongs to the HSF family. Homotrimer. Homotrimerization increases the affinity of HSF1 to DNA.

The protein resides in the nucleus. Functionally, DNA-binding transcription factor that specifically binds heat shock promoter elements (HSE) and activates transcription. This chain is Probable heat shock transcription factor, found in Vairimorpha ceranae (strain BRL01) (Microsporidian parasite).